Reading from the N-terminus, the 454-residue chain is Apyrase (454 aa).

Residues 1–7 lie on the Cytoplasmic side of the membrane; that stretch reads MLNQNSH. Residues 8–28 traverse the membrane as a helical; Signal-anchor for type II membrane protein segment; the sequence is FIFIILAIFLVLPLSLLSKNV. Over 29–454 the chain is Extracellular; it reads NAQIPLRRHL…TTNKIRVASS (426 aa). 48 to 58 provides a ligand contact to ATP; the sequence is VIFDAGSTGSR. A glycan (N-linked (GlcNAc...) asparagine) is linked at Asn151. Residue Glu170 is the Proton acceptor of the active site. Position 194–204 (194–204) interacts with ATP; sequence ATIDLGGGSVQ. A glycan (N-linked (GlcNAc...) asparagine) is linked at Asn262.

This sequence belongs to the GDA1/CD39 NTPase family. Ca(2+) is required as a cofactor. Post-translationally, the N-terminus is blocked.

The protein resides in the membrane. The enzyme catalyses a ribonucleoside 5'-triphosphate + 2 H2O = a ribonucleoside 5'-phosphate + 2 phosphate + 2 H(+). Its function is as follows. Catalyzes the hydrolysis of phosphoanhydride bonds of nucleoside tri- and di-phosphates. This chain is Apyrase (RROP1), found in Solanum tuberosum (Potato).